Here is an 88-residue protein sequence, read N- to C-terminus: Cell division topological specificity factor (88 aa).

This sequence belongs to the MinE family.

Prevents the cell division inhibition by proteins MinC and MinD at internal division sites while permitting inhibition at polar sites. This ensures cell division at the proper site by restricting the formation of a division septum at the midpoint of the long axis of the cell. This is Cell division topological specificity factor from Pseudoalteromonas translucida (strain TAC 125).